Here is a 403-residue protein sequence, read N- to C-terminus: Glycerophosphocholine acyltransferase 1 (403 aa).

The Cytoplasmic portion of the chain corresponds to 1-112 (MDHLEFDENT…SGKVVRFRDK (112 aa)). A helical membrane pass occupies residues 113–133 (LSFALGVSTCILTALLVGMAP). At 134 to 137 (ESMH) the chain is on the lumenal side. The chain crosses the membrane as a helical span at residues 138 to 155 (LWYTIQLFVYLPLRYYTY). Residues 156 to 161 (QRKGYE) lie on the Cytoplasmic side of the membrane. A helical transmembrane segment spans residues 162 to 182 (YFIADFCYWGNILLLVYIWIF). Topologically, residues 183-186 (PESR) are lumenal. Residues 187–207 (RLFILSYSISYGTLAWSVVAW) form a helical membrane-spanning segment. The Cytoplasmic portion of the chain corresponds to 208-218 (RNSLLFHSIDK). Residues 219 to 239 (ITSLFIHFFPPLVLHTIVHLT) traverse the membrane as a helical segment. N-linked (GlcNAc...) asparagine glycosylation occurs at Asn-240. At 240–262 (NKSYLKDRFPAVLKVKKIDLLSS) the chain is on the lumenal side. The helical transmembrane segment at 263–283 (VEIASFFYALWQIWYYFFIQV) threads the bilayer. The Cytoplasmic portion of the chain corresponds to 284 to 322 (GKQKQIQEGRPTSFTWLSKAYSKTKLGRAVAKLPQNLQP). Residues 323–343 (FVFMIIQYLYSITTMLPCSLW) form a helical membrane-spanning segment. At 344 to 352 (YNNKLYSTA) the chain is on the lumenal side. The helical transmembrane segment at 353 to 373 (FLALIFGWSVWNGASYYIDVF) threads the bilayer. The Cytoplasmic segment spans residues 374 to 403 (GRRFQKELEALRQQLAETPTNSGSSSALSR).

It belongs to the GPC1 family.

It localises to the endoplasmic reticulum membrane. The protein localises to the golgi apparatus membrane. It catalyses the reaction sn-glycerol 3-phosphocholine + an acyl-CoA = a 1-acyl-sn-glycero-3-phosphocholine + CoA. The enzyme catalyses sn-glycero-3-phosphoethanolamine + an acyl-CoA = a monoacyl-sn-glycero-3-phosphoethanolamine + CoA. The catalysed reaction is sn-glycero-3-phosphoethanolamine + (9Z)-octadecenoyl-CoA = (9Z-octadecenoyl)-sn-glycero-3-phosphoethanolamine + CoA. Glycerophosphocholine acyltransferase (GPCAT) that utilizes acyl-CoA to acylate glycero-3-phosphocholine (GPC), forming lysophosphatidylcholine (LPC). Shows broad acyl specificities with a preference for 16:0-CoA, polyunsaturated acyl-CoA, and the hydroxylated ricinoleoyl-CoA. Also catalyzes the acylation of glycero-3-phosphoethanolamine (GPE) with acyl-CoA. In addition to acyl-CoA, GPCAT efficiently utilizes LPC and lysophosphatidylethanolamine (LPE) as acyl donors in the acylation of GPC. Contributes to the maintenance of phosphatidylcholine (PC) homeostasis and might also have specific functions in acyl editing of PC, such as transferring acyl groups modified at the sn-2 position of PC to the sn-1. The polypeptide is Glycerophosphocholine acyltransferase 1 (Schizosaccharomyces pombe (strain 972 / ATCC 24843) (Fission yeast)).